The following is a 70-amino-acid chain: DNA-directed RNA polymerase subunit omega (70 aa).

Belongs to the RNA polymerase subunit omega family. In terms of assembly, the RNAP catalytic core consists of 2 alpha, 1 beta, 1 beta' and 1 omega subunit. When a sigma factor is associated with the core the holoenzyme is formed, which can initiate transcription.

The catalysed reaction is RNA(n) + a ribonucleoside 5'-triphosphate = RNA(n+1) + diphosphate. Functionally, promotes RNA polymerase assembly. Latches the N- and C-terminal regions of the beta' subunit thereby facilitating its interaction with the beta and alpha subunits. The protein is DNA-directed RNA polymerase subunit omega of Methylobacillus flagellatus (strain ATCC 51484 / DSM 6875 / VKM B-1610 / KT).